Reading from the N-terminus, the 580-residue chain is Anaphase-promoting complex subunit 7 (580 aa).

TPR repeat units lie at residues 50-83 (IISF…LFKV), 107-140 (YELK…SRGL), 141-175 (DTHL…CPLC), 253-286 (VLEK…DPYY), 321-354 (AETW…KESH), 356-388 (FAHS…SKNI), 390-421 (TARE…SPDY), 422-456 (SKTM…SPHC), 458-490 (DTVL…QETD), and 491-523 (LMHT…NPQY). Residues 539-580 (GIDPDQELDQENDDDDQEEGEGENDQEENDDDDNDDDDEYIS) form a disordered region. Acidic residues predominate over residues 542–580 (PDQELDQENDDDDQEEGEGENDQEENDDDDNDDDDEYIS).

The protein belongs to the APC7 family. As to quaternary structure, the APC/C is composed of at least 13 subunits that stay tightly associated throughout the cell cycle: anapc1, anapc2, anapc3, anapc4, anapc5, anapc6, anapc7, anapc8, anapc10, anapc11, cdc20, cdc26 and cdh1.

The protein localises to the nucleus. Its pathway is protein modification; protein ubiquitination. Component of the anaphase promoting complex/cyclosome (APC/C), a cell cycle-regulated E3 ubiquitin-protein ligase complex that controls progression through mitosis and the G1 phase of the cell cycle. This is Anaphase-promoting complex subunit 7 (anapc7) from Dictyostelium discoideum (Social amoeba).